A 283-amino-acid chain; its full sequence is Protoheme IX farnesyltransferase 1 (283 aa).

The next 9 membrane-spanning stretches (helical) occupy residues 14-34 (IALM…TKVD), 35-55 (PVAL…SAVF), 84-104 (LGFA…NAAF), 107-127 (VVAL…TVWL), 133-153 (TNII…AAAV), 163-183 (VLAL…AILL), 208-228 (ILAN…LGLL), 231-251 (VYGF…VVLV), and 258-278 (WAGW…IAVF).

The protein belongs to the UbiA prenyltransferase family. Protoheme IX farnesyltransferase subfamily.

The protein localises to the cell inner membrane. The catalysed reaction is heme b + (2E,6E)-farnesyl diphosphate + H2O = Fe(II)-heme o + diphosphate. It participates in porphyrin-containing compound metabolism; heme O biosynthesis; heme O from protoheme: step 1/1. Its function is as follows. Converts heme B (protoheme IX) to heme O by substitution of the vinyl group on carbon 2 of heme B porphyrin ring with a hydroxyethyl farnesyl side group. This chain is Protoheme IX farnesyltransferase 1, found in Paramagnetospirillum magneticum (strain ATCC 700264 / AMB-1) (Magnetospirillum magneticum).